The following is a 174-amino-acid chain: Adenine phosphoribosyltransferase (174 aa).

This sequence belongs to the purine/pyrimidine phosphoribosyltransferase family. In terms of assembly, homodimer.

It is found in the cytoplasm. It catalyses the reaction AMP + diphosphate = 5-phospho-alpha-D-ribose 1-diphosphate + adenine. It functions in the pathway purine metabolism; AMP biosynthesis via salvage pathway; AMP from adenine: step 1/1. Functionally, catalyzes a salvage reaction resulting in the formation of AMP, that is energically less costly than de novo synthesis. This Photobacterium profundum (strain SS9) protein is Adenine phosphoribosyltransferase.